A 244-amino-acid chain; its full sequence is Glucosamine-6-phosphate deaminase (244 aa).

The active-site Proton acceptor; for enolization step is the aspartate 67. The For ring-opening step role is filled by asparagine 136. Histidine 138 (proton acceptor; for ring-opening step) is an active-site residue. Glutamate 143 acts as the For ring-opening step in catalysis.

This sequence belongs to the glucosamine/galactosamine-6-phosphate isomerase family. NagB subfamily.

The catalysed reaction is alpha-D-glucosamine 6-phosphate + H2O = beta-D-fructose 6-phosphate + NH4(+). It functions in the pathway amino-sugar metabolism; N-acetylneuraminate degradation; D-fructose 6-phosphate from N-acetylneuraminate: step 5/5. Functionally, catalyzes the reversible isomerization-deamination of glucosamine 6-phosphate (GlcN6P) to form fructose 6-phosphate (Fru6P) and ammonium ion. This is Glucosamine-6-phosphate deaminase from Clostridium botulinum (strain 657 / Type Ba4).